Consider the following 227-residue polypeptide: MLVHIPNVLTPEQVSMLRDRLDRAGDAWVDGRATAGYTGAPVKRNQQIAEHSPVARELGDVILAALERNPLFISAALPNQVYPPLFNRYEGGMTFGSHVDGAVRVLPNGVKLRTDVSVTLFLSAPDEYDGGELVIEDAYGVQQVKLPAGDMIVYPATSLHQVTPVTRGVRVASFFWVQSLVRSDAQRALLFDMDTAIQRLNASGADTEACRSLVGCYHNLLRIWSET.

A Fe2OG dioxygenase domain is found at 80–179 (QVYPPLFNRY…RVASFFWVQS (100 aa)). Residues His-98, Asp-100, and His-160 each contribute to the Fe cation site. Position 170 (Arg-170) interacts with 2-oxoglutarate.

Fe(2+) serves as cofactor. L-ascorbate is required as a cofactor.

The chain is PKHD-type hydroxylase BamMC406_5004 from Burkholderia ambifaria (strain MC40-6).